Here is a 384-residue protein sequence, read N- to C-terminus: Ribosomal RNA large subunit methyltransferase G (384 aa).

The protein belongs to the methyltransferase superfamily. RlmG family.

It localises to the cytoplasm. The enzyme catalyses guanosine(1835) in 23S rRNA + S-adenosyl-L-methionine = N(2)-methylguanosine(1835) in 23S rRNA + S-adenosyl-L-homocysteine + H(+). Specifically methylates the guanine in position 1835 (m2G1835) of 23S rRNA. This is Ribosomal RNA large subunit methyltransferase G from Streptomyces griseus subsp. griseus (strain JCM 4626 / CBS 651.72 / NBRC 13350 / KCC S-0626 / ISP 5235).